Here is a 308-residue protein sequence, read N- to C-terminus: Pantothenate kinase (308 aa).

91-98 (GSVAVGKS) lines the ATP pocket.

It belongs to the prokaryotic pantothenate kinase family.

The protein resides in the cytoplasm. It carries out the reaction (R)-pantothenate + ATP = (R)-4'-phosphopantothenate + ADP + H(+). Its pathway is cofactor biosynthesis; coenzyme A biosynthesis; CoA from (R)-pantothenate: step 1/5. The polypeptide is Pantothenate kinase (Lacticaseibacillus paracasei (strain ATCC 334 / BCRC 17002 / CCUG 31169 / CIP 107868 / KCTC 3260 / NRRL B-441) (Lactobacillus paracasei)).